Here is a 789-residue protein sequence, read N- to C-terminus: Mediator of RNA polymerase II transcription subunit 15 (789 aa).

Residues 9-73 form an interaction with SREBF1 region; the sequence is DWRSAAFRQK…IHFRDIHNKK (65 aa). 2 disordered regions span residues 88 to 140 and 257 to 326; these read LTGG…APHG and QQQA…PLVS. Residues 89–102 are compositionally biased toward low complexity; it reads TGGPTPGAAGIGMP. The segment covering 108–118 has biased composition (gly residues); the sequence is QSLGGMGGLGA. Low complexity-rich tracts occupy residues 257–274, 282–291, and 302–326; these read QQQALQAQPPMQQPSMQQ, ALPQQLSQLH, and AQQSPIAQNQPPQIPPQSQSQPLVS. An Asymmetric dimethylarginine modification is found at Arg-347. Residues 404–531 are disordered; that stretch reads RFPPTSTMSA…PAGSSQAEEQ (128 aa). The span at 407–426 shows a compositional bias: polar residues; sequence PTSTMSAGPSSSISLGGQPT. The span at 427–450 shows a compositional bias: low complexity; that stretch reads TQVSQSSLTMLSSPSPGQQVQTPQ. The span at 451-463 shows a compositional bias: pro residues; the sequence is SMPPPPQPSPQPG. The span at 464–483 shows a compositional bias: low complexity; it reads SQPNSNVSSGPAPSPSSFLP. Polar residues-rich tracts occupy residues 494 to 504 and 512 to 530; these read VTARTPQNFSV and TPVNPSSVMSPAGSSQAEE. Positions 548-565 match the Nuclear localization signal motif; that stretch reads RRMINKIDKNEDRKKDLS. At Thr-604 the chain carries Phosphothreonine.

This sequence belongs to the Mediator complex subunit 15 family. Component of the Mediator complex, which is composed of MED1, MED4, MED6, MED7, MED8, MED9, MED10, MED11, MED12, MED13, MED13L, MED14, MED15, MED16, MED17, MED18, MED19, MED20, MED21, MED22, MED23, MED24, MED25, MED26, MED27, MED29, MED30, MED31, CCNC, CDK8 and CDC2L6/CDK11. The MED12, MED13, CCNC and CDK8 subunits form a distinct module termed the CDK8 module. Mediator containing the CDK8 module is less active than Mediator lacking this module in supporting transcriptional activation. Individual preparations of the Mediator complex lacking one or more distinct subunits have been variously termed ARC, CRSP, DRIP, PC2, SMCC and TRAP. Interacts with SMAD2, SMAD3, SREBF1 and SREBF2. Interacts with WWTR1. Interacts with TRIM11. Ubiquitinated by TRIM11, leading to proteasomal degradation.

Its subcellular location is the cytoplasm. It localises to the nucleus. Its function is as follows. Component of the Mediator complex, a coactivator involved in the regulated transcription of nearly all RNA polymerase II-dependent genes. Mediator functions as a bridge to convey information from gene-specific regulatory proteins to the basal RNA polymerase II transcription machinery. Mediator is recruited to promoters by direct interactions with regulatory proteins and serves as a scaffold for the assembly of a functional preinitiation complex with RNA polymerase II and the general transcription factors. Required for cholesterol-dependent gene regulation. Positively regulates the Nodal signaling pathway. This Mus musculus (Mouse) protein is Mediator of RNA polymerase II transcription subunit 15 (Med15).